Here is a 151-residue protein sequence, read N- to C-terminus: Large ribosomal subunit protein bL17 (151 aa).

Belongs to the bacterial ribosomal protein bL17 family. In terms of assembly, part of the 50S ribosomal subunit. Contacts protein L32.

This Chlorobium limicola (strain DSM 245 / NBRC 103803 / 6330) protein is Large ribosomal subunit protein bL17.